A 159-amino-acid chain; its full sequence is Nucleotide-binding protein Avin_13410 (159 aa).

The protein belongs to the YajQ family.

Its function is as follows. Nucleotide-binding protein. The sequence is that of Nucleotide-binding protein Avin_13410 from Azotobacter vinelandii (strain DJ / ATCC BAA-1303).